Consider the following 458-residue polypeptide: tRNA modification GTPase MnmE (458 aa).

Positions 26, 88, and 127 each coordinate (6S)-5-formyl-5,6,7,8-tetrahydrofolate. The 155-residue stretch at 224–378 (GLSTAIIGRP…IEDRINQLFF (155 aa)) folds into the TrmE-type G domain. Asn-234 contacts K(+). GTP contacts are provided by residues 234–239 (NVGKSS), 253–259 (TDIAGTT), and 278–281 (DTAG). Ser-238 is a Mg(2+) binding site. Thr-253, Ile-255, and Thr-258 together coordinate K(+). Residue Thr-259 coordinates Mg(2+). Lys-458 is a binding site for (6S)-5-formyl-5,6,7,8-tetrahydrofolate.

The protein belongs to the TRAFAC class TrmE-Era-EngA-EngB-Septin-like GTPase superfamily. TrmE GTPase family. As to quaternary structure, homodimer. Heterotetramer of two MnmE and two MnmG subunits. K(+) is required as a cofactor.

It is found in the cytoplasm. Functionally, exhibits a very high intrinsic GTPase hydrolysis rate. Involved in the addition of a carboxymethylaminomethyl (cmnm) group at the wobble position (U34) of certain tRNAs, forming tRNA-cmnm(5)s(2)U34. The protein is tRNA modification GTPase MnmE of Streptococcus pyogenes serotype M12 (strain MGAS9429).